The following is a 385-amino-acid chain: Lipoyl synthase, mitochondrial (385 aa).

The disordered stretch occupies residues 18–40; that stretch reads TKAKNRTFSSSTVESSTKQPPQF. The [4Fe-4S] cluster site is built by cysteine 113, cysteine 118, cysteine 124, cysteine 144, cysteine 148, cysteine 151, and serine 360. Positions 129–349 constitute a Radical SAM core domain; it reads ETGTATATIM…KTLGMEMGFR (221 aa).

The protein belongs to the radical SAM superfamily. Lipoyl synthase family. It depends on [4Fe-4S] cluster as a cofactor.

It localises to the mitochondrion. The catalysed reaction is [[Fe-S] cluster scaffold protein carrying a second [4Fe-4S](2+) cluster] + N(6)-octanoyl-L-lysyl-[protein] + 2 oxidized [2Fe-2S]-[ferredoxin] + 2 S-adenosyl-L-methionine + 4 H(+) = [[Fe-S] cluster scaffold protein] + N(6)-[(R)-dihydrolipoyl]-L-lysyl-[protein] + 4 Fe(3+) + 2 hydrogen sulfide + 2 5'-deoxyadenosine + 2 L-methionine + 2 reduced [2Fe-2S]-[ferredoxin]. It participates in protein modification; protein lipoylation via endogenous pathway; protein N(6)-(lipoyl)lysine from octanoyl-[acyl-carrier-protein]: step 2/2. Functionally, catalyzes the radical-mediated insertion of two sulfur atoms into the C-6 and C-8 positions of the octanoyl moiety bound to the lipoyl domains of lipoate-dependent enzymes, thereby converting the octanoylated domains into lipoylated derivatives. The polypeptide is Lipoyl synthase, mitochondrial (Populus trichocarpa (Western balsam poplar)).